The primary structure comprises 347 residues: Protein-glutamate methylesterase/protein-glutamine glutaminase 4 (347 aa).

The region spanning 3–121 (KVLIVDDSAS…HPNHEREARS (119 aa)) is the Response regulatory domain. Position 54 is a 4-aspartylphosphate (D54). Residues 157–342 (PARLKAVAIG…PDRIVTALTS (186 aa)) enclose the CheB-type methylesterase domain. Active-site residues include S168, H195, and D289.

It belongs to the CheB family. Post-translationally, phosphorylated by CheA. Phosphorylation of the N-terminal regulatory domain activates the methylesterase activity.

The protein resides in the cytoplasm. It carries out the reaction [protein]-L-glutamate 5-O-methyl ester + H2O = L-glutamyl-[protein] + methanol + H(+). It catalyses the reaction L-glutaminyl-[protein] + H2O = L-glutamyl-[protein] + NH4(+). Involved in chemotaxis. Part of a chemotaxis signal transduction system that modulates chemotaxis in response to various stimuli. Catalyzes the demethylation of specific methylglutamate residues introduced into the chemoreceptors (methyl-accepting chemotaxis proteins or MCP) by CheR. Also mediates the irreversible deamidation of specific glutamine residues to glutamic acid. The polypeptide is Protein-glutamate methylesterase/protein-glutamine glutaminase 4 (Geobacter metallireducens (strain ATCC 53774 / DSM 7210 / GS-15)).